The sequence spans 528 residues: Probable histone-arginine methyltransferase 1.4 (528 aa).

Residue Met-1 is modified to N-acetylmethionine. Residues 144–459 (EAASAKMYFH…QSYTINLTLS (316 aa)) form the SAM-dependent MTase PRMT-type domain. Positions 161, 170, 194, 216, and 246 each coordinate S-adenosyl-L-methionine. Catalysis depends on residues Glu-260 and Glu-269. Thr-274 contributes to the S-adenosyl-L-methionine binding site.

It belongs to the class I-like SAM-binding methyltransferase superfamily. Protein arginine N-methyltransferase family.

It is found in the nucleus. Its subcellular location is the cytoplasm. It catalyses the reaction L-arginyl-[protein] + 2 S-adenosyl-L-methionine = N(omega),N(omega)-dimethyl-L-arginyl-[protein] + 2 S-adenosyl-L-homocysteine + 2 H(+). Functionally, methylates (mono- and asymmetric dimethylation) the guanidino nitrogens of arginyl residues in several proteins involved in DNA packaging, transcription regulation, and mRNA stability. Recruited to promoters upon gene activation, methylates histone H3 and activates transcription via chromatin remodeling. The chain is Probable histone-arginine methyltransferase 1.4 (PRMT14) from Arabidopsis thaliana (Mouse-ear cress).